Consider the following 231-residue polypeptide: LexA repressor (231 aa).

The H-T-H motif DNA-binding region spans 26 to 46 (FDEMKDALDLRSKSGIHRLIT). Catalysis depends on for autocatalytic cleavage activity residues Ser-152 and Lys-190.

It belongs to the peptidase S24 family. In terms of assembly, homodimer.

It carries out the reaction Hydrolysis of Ala-|-Gly bond in repressor LexA.. Its function is as follows. Represses a number of genes involved in the response to DNA damage (SOS response), including recA and lexA. In the presence of single-stranded DNA, RecA interacts with LexA causing an autocatalytic cleavage which disrupts the DNA-binding part of LexA, leading to derepression of the SOS regulon and eventually DNA repair. In Bradyrhizobium diazoefficiens (strain JCM 10833 / BCRC 13528 / IAM 13628 / NBRC 14792 / USDA 110), this protein is LexA repressor.